A 127-amino-acid polypeptide reads, in one-letter code: Small ribosomal subunit protein bS6 (127 aa).

The protein belongs to the bacterial ribosomal protein bS6 family.

Its function is as follows. Binds together with bS18 to 16S ribosomal RNA. The protein is Small ribosomal subunit protein bS6 of Buchnera aphidicola subsp. Cinara cedri (strain Cc).